A 123-amino-acid polypeptide reads, in one-letter code: ATP synthase epsilon chain (123 aa).

Residues Glu-96 to Ala-123 form a disordered region.

Belongs to the ATPase epsilon chain family. As to quaternary structure, F-type ATPases have 2 components, CF(1) - the catalytic core - and CF(0) - the membrane proton channel. CF(1) has five subunits: alpha(3), beta(3), gamma(1), delta(1), epsilon(1). CF(0) has three main subunits: a, b and c.

Its subcellular location is the cell membrane. Functionally, produces ATP from ADP in the presence of a proton gradient across the membrane. The chain is ATP synthase epsilon chain from Corynebacterium jeikeium (strain K411).